The sequence spans 831 residues: Translation initiation factor IF-2 (831 aa).

The tract at residues 116–157 (IEPLETDKEVEQKQQNTEENKVEVSAKIVQDDEDIPSQIPKK) is disordered. Basic and acidic residues predominate over residues 117–139 (EPLETDKEVEQKQQNTEENKVEV). Residues 329-499 (TRAPVVTVMG…LLIAEMQDLK (171 aa)) form the tr-type G domain. The tract at residues 338-345 (GHVDHGKT) is G1. 338 to 345 (GHVDHGKT) contributes to the GTP binding site. Residues 363–367 (GITQH) are G2. The interval 385-388 (DTPG) is G3. GTP contacts are provided by residues 385–389 (DTPGH) and 439–442 (NKID). Residues 439 to 442 (NKID) are G4. The segment at 475–477 (SAL) is G5.

It belongs to the TRAFAC class translation factor GTPase superfamily. Classic translation factor GTPase family. IF-2 subfamily.

It is found in the cytoplasm. Functionally, one of the essential components for the initiation of protein synthesis. Protects formylmethionyl-tRNA from spontaneous hydrolysis and promotes its binding to the 30S ribosomal subunits. Also involved in the hydrolysis of GTP during the formation of the 70S ribosomal complex. The polypeptide is Translation initiation factor IF-2 (Rickettsia conorii (strain ATCC VR-613 / Malish 7)).